Here is an 807-residue protein sequence, read N- to C-terminus: Glycerol-3-phosphate acyltransferase (807 aa).

The short motif at 308 to 313 is the HXXXXD motif element; the sequence is CHRSHM.

The protein belongs to the GPAT/DAPAT family.

The protein localises to the cell inner membrane. The enzyme catalyses sn-glycerol 3-phosphate + an acyl-CoA = a 1-acyl-sn-glycero-3-phosphate + CoA. The protein operates within phospholipid metabolism; CDP-diacylglycerol biosynthesis; CDP-diacylglycerol from sn-glycerol 3-phosphate: step 1/3. In Shewanella putrefaciens (strain CN-32 / ATCC BAA-453), this protein is Glycerol-3-phosphate acyltransferase.